The following is a 453-amino-acid chain: Bifunctional protein GlmU (453 aa).

The interval 1–226 (MVAIAILAAG…YEEILGINDR (226 aa)) is pyrophosphorylase. Residues 7 to 10 (LAAG), Lys21, Gln73, and 78 to 79 (GT) each bind UDP-N-acetyl-alpha-D-glucosamine. Asp103 serves as a coordination point for Mg(2+). 4 residues coordinate UDP-N-acetyl-alpha-D-glucosamine: Gly140, Glu155, Asn170, and Asn224. Asn224 contacts Mg(2+). Positions 227–247 (KQLALAYQILQNRIKDQAMAA) are linker. The interval 248-453 (GVTLIDPDSI…GWRLKQPDPT (206 aa)) is N-acetyltransferase. UDP-N-acetyl-alpha-D-glucosamine is bound by residues Arg329 and Lys347. Catalysis depends on His359, which acts as the Proton acceptor. UDP-N-acetyl-alpha-D-glucosamine-binding residues include Tyr362 and Asn373. Residues Ala376, 382–383 (NY), Ser401, Ala419, and Arg436 each bind acetyl-CoA.

The protein in the N-terminal section; belongs to the N-acetylglucosamine-1-phosphate uridyltransferase family. It in the C-terminal section; belongs to the transferase hexapeptide repeat family. In terms of assembly, homotrimer. Mg(2+) is required as a cofactor.

Its subcellular location is the cytoplasm. The enzyme catalyses alpha-D-glucosamine 1-phosphate + acetyl-CoA = N-acetyl-alpha-D-glucosamine 1-phosphate + CoA + H(+). It carries out the reaction N-acetyl-alpha-D-glucosamine 1-phosphate + UTP + H(+) = UDP-N-acetyl-alpha-D-glucosamine + diphosphate. Its pathway is nucleotide-sugar biosynthesis; UDP-N-acetyl-alpha-D-glucosamine biosynthesis; N-acetyl-alpha-D-glucosamine 1-phosphate from alpha-D-glucosamine 6-phosphate (route II): step 2/2. The protein operates within nucleotide-sugar biosynthesis; UDP-N-acetyl-alpha-D-glucosamine biosynthesis; UDP-N-acetyl-alpha-D-glucosamine from N-acetyl-alpha-D-glucosamine 1-phosphate: step 1/1. It participates in bacterial outer membrane biogenesis; LPS lipid A biosynthesis. In terms of biological role, catalyzes the last two sequential reactions in the de novo biosynthetic pathway for UDP-N-acetylglucosamine (UDP-GlcNAc). The C-terminal domain catalyzes the transfer of acetyl group from acetyl coenzyme A to glucosamine-1-phosphate (GlcN-1-P) to produce N-acetylglucosamine-1-phosphate (GlcNAc-1-P), which is converted into UDP-GlcNAc by the transfer of uridine 5-monophosphate (from uridine 5-triphosphate), a reaction catalyzed by the N-terminal domain. The polypeptide is Bifunctional protein GlmU (Cyanothece sp. (strain PCC 7425 / ATCC 29141)).